Consider the following 259-residue polypeptide: Malonyl-[acyl-carrier protein] O-methyltransferase 2 (259 aa).

It belongs to the methyltransferase superfamily.

It catalyses the reaction malonyl-[ACP] + S-adenosyl-L-methionine = malonyl-[ACP] methyl ester + S-adenosyl-L-homocysteine. Its pathway is cofactor biosynthesis; biotin biosynthesis. Converts the free carboxyl group of a malonyl-thioester to its methyl ester by transfer of a methyl group from S-adenosyl-L-methionine (SAM). It allows to synthesize pimeloyl-ACP via the fatty acid synthetic pathway. The chain is Malonyl-[acyl-carrier protein] O-methyltransferase 2 from Ilyobacter polytropus (strain ATCC 51220 / DSM 2926 / LMG 16218 / CuHBu1).